A 142-amino-acid chain; its full sequence is uncharacterized protein (142 aa).

One can recognise an N-acetyltransferase domain in the interval 2 to 142; that stretch reads IHMKQLTSKE…IESYLFRKPV (141 aa).

Belongs to the acetyltransferase family.

This is an uncharacterized protein from Bacillus subtilis (strain 168).